A 252-amino-acid chain; its full sequence is LexA repressor (252 aa).

The disordered stretch occupies residues 1 to 46 (MPEENRGGHQPYTEESSVSALHPVRTDDSVGSSAEQTGDAPTLTER). The H-T-H motif DNA-binding region spans 67–87 (IREIGEAVGLSSPSSVAHQLK). Active-site for autocatalytic cleavage activity residues include serine 176 and lysine 213.

This sequence belongs to the peptidase S24 family. Homodimer.

The enzyme catalyses Hydrolysis of Ala-|-Gly bond in repressor LexA.. Its function is as follows. Represses a number of genes involved in the response to DNA damage (SOS response), including recA and lexA. In the presence of single-stranded DNA, RecA interacts with LexA causing an autocatalytic cleavage which disrupts the DNA-binding part of LexA, leading to derepression of the SOS regulon and eventually DNA repair. This chain is LexA repressor, found in Thermobifida fusca (strain YX).